The sequence spans 192 residues: uncharacterized protein (192 aa).

Residues Gly72–Val192 enclose the B12-binding domain.

This is an uncharacterized protein from Rhodobacter capsulatus (Rhodopseudomonas capsulata).